The sequence spans 1034 residues: Ubiquitin-like-specific protease 2 (1034 aa).

6 disordered regions span residues 1–42 (MSAR…FRKD), 71–110 (IELS…HSSL), 388–419 (SHAV…DDAT), 731–800 (IDQS…PIRH), 841–960 (GVSS…DSLG), and 983–1034 (SSPT…DEDP). The span at 19–33 (SSRASSPRSSASLPP) shows a compositional bias: low complexity. Positions 74–85 (SDNDVDNNDEGE) are enriched in acidic residues. Residues 743–756 (TSEPPCSRSSSIST) are compositionally biased toward low complexity. Ser-788 is subject to Phosphoserine. Polar residues-rich tracts occupy residues 845–856 (PIKNDQALSSTH), 876–904 (QLSS…VISD), and 912–923 (GVNSESKNTSGI). The residue at position 903 (Ser-903) is a Phosphoserine. Phosphoserine is present on residues Ser-983 and Ser-984. The segment covering 992-1017 (TSATSKGSNAQLLSNYGDENNQSQDS) has biased composition (polar residues).

It belongs to the peptidase C48 family.

Insertion mutation in SMT4 confers temperature and benomyl sensitivity; high copy suppressor of a temperature sensitive mutation in MIF2. The chain is Ubiquitin-like-specific protease 2 (ULP2) from Saccharomyces cerevisiae (strain ATCC 204508 / S288c) (Baker's yeast).